Here is a 683-residue protein sequence, read N- to C-terminus: Translation initiation factor IF-2 (683 aa).

Positions lysine 182 to lysine 351 constitute a tr-type G domain. Residues glycine 191–threonine 198 form a G1 region. Glycine 191–threonine 198 is a GTP binding site. The segment at glycine 216–histidine 220 is G2. The segment at aspartate 237 to glycine 240 is G3. GTP is bound by residues aspartate 237–histidine 241 and asparagine 291–aspartate 294. Residues asparagine 291–aspartate 294 are G4. Positions serine 327–histidine 329 are G5.

It belongs to the TRAFAC class translation factor GTPase superfamily. Classic translation factor GTPase family. IF-2 subfamily.

Its subcellular location is the cytoplasm. Functionally, one of the essential components for the initiation of protein synthesis. Protects formylmethionyl-tRNA from spontaneous hydrolysis and promotes its binding to the 30S ribosomal subunits. Also involved in the hydrolysis of GTP during the formation of the 70S ribosomal complex. The sequence is that of Translation initiation factor IF-2 from Clostridium novyi (strain NT).